A 430-amino-acid polypeptide reads, in one-letter code: Lipoyl synthase, mitochondrial (430 aa).

The transit peptide at 1 to 37 (MAASTGKLRTLFSAHSSLSARPSSALPALRLTILRSY) directs the protein to the mitochondrion. Positions 40 to 56 (TTPPDSSISDPSNSSTT) are enriched in low complexity. The interval 40-63 (TTPPDSSISDPSNSSTTVKRPPTA) is disordered. [4Fe-4S] cluster is bound by residues Cys-141, Cys-146, Cys-152, Cys-172, Cys-176, Cys-179, and Ser-387. Residues 155–376 (GSSKSAATAT…KERALEMGFL (222 aa)) enclose the Radical SAM core domain.

The protein belongs to the radical SAM superfamily. Lipoyl synthase family. It depends on [4Fe-4S] cluster as a cofactor.

It is found in the mitochondrion. It catalyses the reaction [[Fe-S] cluster scaffold protein carrying a second [4Fe-4S](2+) cluster] + N(6)-octanoyl-L-lysyl-[protein] + 2 oxidized [2Fe-2S]-[ferredoxin] + 2 S-adenosyl-L-methionine + 4 H(+) = [[Fe-S] cluster scaffold protein] + N(6)-[(R)-dihydrolipoyl]-L-lysyl-[protein] + 4 Fe(3+) + 2 hydrogen sulfide + 2 5'-deoxyadenosine + 2 L-methionine + 2 reduced [2Fe-2S]-[ferredoxin]. It participates in protein modification; protein lipoylation via endogenous pathway; protein N(6)-(lipoyl)lysine from octanoyl-[acyl-carrier-protein]: step 2/2. Its function is as follows. Catalyzes the radical-mediated insertion of two sulfur atoms into the C-6 and C-8 positions of the octanoyl moiety bound to the lipoyl domains of lipoate-dependent enzymes, thereby converting the octanoylated domains into lipoylated derivatives. The sequence is that of Lipoyl synthase, mitochondrial from Ajellomyces dermatitidis (strain ER-3 / ATCC MYA-2586) (Blastomyces dermatitidis).